The sequence spans 241 residues: MATVSMRDMLQAGVHFGHQTRYWNPKMKPFIFGARNKVHIINLEKTVPMFNEALAELTKISSRKGKILFVGTKRAASEAVKEAANNCDQFFVNHRWLGGMLTNWKTVRQSIKRLKDLEIQSQDGTFDKLTKKEALMRTRELNKLENSLGGIKDMGGLPDALFVVDADHEHIAIKEANNLGIPVFSIVDTNSDPDGVDFIIPGNDDAIRAVKLYLGAVATAVREGRSQDLAVQAEESFVEAE.

The protein belongs to the universal ribosomal protein uS2 family.

This chain is Small ribosomal subunit protein uS2, found in Yersinia pestis bv. Antiqua (strain Antiqua).